The following is a 623-amino-acid chain: Hemagglutinin component HA-70 type D (623 aa).

In terms of assembly, botulinum toxins are produced as large progenitor toxins of 12S (M toxin, about 280 kDa) and 16S (L toxin, about 650 kDa). M toxin consists of a non-toxic, non-hemagglutinin component (NTNHA) and the neurotoxin (BoNT/D). L toxin consists of the M toxin and the 3 hemagglutinin (HA) subcomponents of 70, 33, and 17 kDa. The stoichiometry of the whole complex has been modeled as one BoNT/D, one NTNHA, three HA-70, six HA-33 and three HA-17. HA-33 and HA-17 crystallize as a heterotrimer with two HA-33 and one HA-17. In terms of processing, limited treatment of L toxin with pepsin or trypsin produces shorter HA-70 proteins (called HA-55, HA-23 and HA-22) sometimes observed in vivo in other strains of type C and D botulinum toxin preparations.

It is found in the secreted. Functionally, the hemagglutinin (HA) component of the progenitor toxin protects the structural integrity of the neurotoxin; may increase internalization of the neurotoxin into the bloodstream of the host. Involved in binding to the small intestine through interactions with glycolipids and glycoproteins containing sialic acid moieties. Erythrocyte agglutination only occurs when the entire complex is assembled. This HA subunit probably connects toxin/NTNHA to HA-33 and HA-17, the other components of the HA complex, and it may also protect the M toxin from proteolysis upon secretion. The protein is Hemagglutinin component HA-70 type D of Clostridium botulinum D phage (Clostridium botulinum D bacteriophage).